A 465-amino-acid chain; its full sequence is Cysteine--tRNA ligase (465 aa).

C30 is a Zn(2+) binding site. Residues 32–42 (ITVYDYCHVGH) carry the 'HIGH' region motif. Residues C214, H239, and E243 each coordinate Zn(2+). Residues 271-275 (KMSKS) carry the 'KMSKS' region motif. K274 lines the ATP pocket.

The protein belongs to the class-I aminoacyl-tRNA synthetase family. As to quaternary structure, monomer. The cofactor is Zn(2+).

The protein localises to the cytoplasm. It catalyses the reaction tRNA(Cys) + L-cysteine + ATP = L-cysteinyl-tRNA(Cys) + AMP + diphosphate. The sequence is that of Cysteine--tRNA ligase from Burkholderia vietnamiensis (strain G4 / LMG 22486) (Burkholderia cepacia (strain R1808)).